Consider the following 502-residue polypeptide: UPF0371 protein CLK_3516 (502 aa).

This sequence belongs to the UPF0371 family.

This is UPF0371 protein CLK_3516 from Clostridium botulinum (strain Loch Maree / Type A3).